The primary structure comprises 454 residues: MRSDTREEISAALDAYHASLSRVLDLKCDALTTPELLACLQRLEVERRRQGAAEHALINQLAGQACEEELGGTLRTALANRLHITPGEASRRIAEAEDLGERRALTGEPLPAQLTATAAAQREGKIGREHIKEIQAFFKELSAAVDLGIREAAEAQLAELATSRRPDHLHGLATQLMDWLHPDGNFSDQERARKRGITMGKQEFDGMSRISGLLTPELRATIEAVLAKLAAPGACNPDDQTPLVDDTPDADAVRRDTRSQAQRNHDAFLAALRGLLASGELGQHKGLPVTIVVSTTLKELEAATGKGVTGGGSRVPMSDLIRMASHANHYLALFDGAKPLALYHTKRLASPAQRIMLYAKDRGCSRPGCDAPAYHSEVHHVTPWTTTHRTDINDLTLACGPDNRLVEKGWKTRKNAHGDTEWLPPPHLDHGQPRINRYHHPAKILCEQDDDEPH.

An HNH domain is found at cysteine 364–leucine 405.

It belongs to the Rv1128c/1148c/1588c/1702c/1945/3466 family.

This is an uncharacterized protein from Mycobacterium tuberculosis (strain ATCC 25618 / H37Rv).